The primary structure comprises 729 residues: Sodium-dependent neutral amino acid transporter B(0)AT2 (729 aa).

The Cytoplasmic segment spans residues 1-69 (MPKNSKVVKR…ERPAWNSKLQ (69 aa)). A phosphoserine mark is found at Ser25 and Ser55. Residues 42-61 (DVQEEKDTDAEDGSEADDER) form a disordered region. Residues 43 to 59 (VQEEKDTDAEDGSEADD) show a composition bias toward acidic residues. Transmembrane regions (helical) follow at residues 70 to 90 (YILA…FPYL), 98 to 117 (AYLL…LFFL), and 142 to 162 (GIGF…NVII). The Extracellular portion of the chain corresponds to 163–225 (GWTLFYFSQS…SSISDSGGLN (63 aa)). Asn187 carries an N-linked (GlcNAc...) asparagine glycan. 2 consecutive transmembrane segments (helical) span residues 226-244 (WKMT…LAMI) and 253-270 (IMYF…CFLI). Asn276 is a glycosylation site (N-linked (GlcNAc...) asparagine). 2 consecutive transmembrane segments (helical) span residues 306 to 323 (VFFA…FSSY) and 335 to 356 (VLVS…FAVL). Topologically, residues 357–452 (GFKANIVNEK…FIAFTEAMTH (96 aa)) are extracellular. N-linked (GlcNAc...) asparagine glycosylation is found at Asn383 and Asn394. The next 5 membrane-spanning stretches (helical) occupy residues 453 to 472 (FPAS…NLGL), 496 to 514 (ILTV…IFVQ), 530 to 550 (TLPL…VYGI), 571 to 592 (YMWK…IVNM), and 620 to 642 (VVCF…IRRC). Topologically, residues 643 to 729 (NLIDDSSGNL…DMPDMPESDL (87 aa)) are cytoplasmic. A phosphoserine mark is found at Ser687, Ser699, and Ser701.

The protein belongs to the sodium:neurotransmitter symporter (SNF) (TC 2.A.22) family. SLC6A15 subfamily. As to expression, significant expressed in brain, lung and kidney. In brain, mainly expressed int the cortex, the cerebellum and the brain stem.

The protein localises to the membrane. It carries out the reaction L-pipecolate(in) + Na(+)(in) = L-pipecolate(out) + Na(+)(out). The enzyme catalyses L-leucine(in) + Na(+)(in) = L-leucine(out) + Na(+)(out). It catalyses the reaction L-isoleucine(in) + Na(+)(in) = L-isoleucine(out) + Na(+)(out). The catalysed reaction is L-methionine(in) + Na(+)(in) = L-methionine(out) + Na(+)(out). It carries out the reaction L-proline(in) + Na(+)(in) = L-proline(out) + Na(+)(out). The enzyme catalyses L-alanine(in) + Na(+)(in) = L-alanine(out) + Na(+)(out). It catalyses the reaction L-asparagine(in) + Na(+)(in) = L-asparagine(out) + Na(+)(out). The catalysed reaction is L-valine(in) + Na(+)(in) = L-valine(out) + Na(+)(out). It carries out the reaction L-cysteine(in) + Na(+)(in) = L-cysteine(out) + Na(+)(out). The enzyme catalyses L-glutamine(in) + Na(+)(in) = L-glutamine(out) + Na(+)(out). It catalyses the reaction L-serine(in) + Na(+)(in) = L-serine(out) + Na(+)(out). The catalysed reaction is L-threonine(in) + Na(+)(in) = L-threonine(out) + Na(+)(out). It carries out the reaction L-phenylalanine(in) + Na(+)(in) = L-phenylalanine(out) + Na(+)(out). Its function is as follows. Functions as a sodium-dependent neutral amino acid transporter. Exhibits preference for methionine and for the branched-chain amino acids, particularly leucine, valine and isoleucine. Can also transport low-affinity substrates such as alanine, phenylalanine, glutamine and pipecolic acid. Mediates the saturable, pH-sensitive and electrogenic cotransport of proline and sodium ions with a stoichiometry of 1:1. May have a role as transporter for neurotransmitter precursors into neurons. In contrast to other members of the neurotransmitter transporter family, does not appear to be chloride-dependent. The protein is Sodium-dependent neutral amino acid transporter B(0)AT2 (Slc6a15) of Mus musculus (Mouse).